A 419-amino-acid polypeptide reads, in one-letter code: Serine hydroxymethyltransferase 2 (419 aa).

(6S)-5,6,7,8-tetrahydrofolate is bound by residues Leu-120 and 124–126 (GHL). Residue Lys-229 is modified to N6-(pyridoxal phosphate)lysine.

Belongs to the SHMT family. As to quaternary structure, homodimer. Requires pyridoxal 5'-phosphate as cofactor.

Its subcellular location is the cytoplasm. The enzyme catalyses (6R)-5,10-methylene-5,6,7,8-tetrahydrofolate + glycine + H2O = (6S)-5,6,7,8-tetrahydrofolate + L-serine. It functions in the pathway one-carbon metabolism; tetrahydrofolate interconversion. The protein operates within amino-acid biosynthesis; glycine biosynthesis; glycine from L-serine: step 1/1. Its function is as follows. Catalyzes the reversible interconversion of serine and glycine with tetrahydrofolate (THF) serving as the one-carbon carrier. This reaction serves as the major source of one-carbon groups required for the biosynthesis of purines, thymidylate, methionine, and other important biomolecules. Also exhibits THF-independent aldolase activity toward beta-hydroxyamino acids, producing glycine and aldehydes, via a retro-aldol mechanism. The sequence is that of Serine hydroxymethyltransferase 2 from Salmonella typhi.